Consider the following 85-residue polypeptide: Small ribosomal subunit protein bS20 (85 aa).

The protein belongs to the bacterial ribosomal protein bS20 family.

Functionally, binds directly to 16S ribosomal RNA. The polypeptide is Small ribosomal subunit protein bS20 (Borreliella afzelii (strain PKo) (Borrelia afzelii)).